Consider the following 150-residue polypeptide: Large ribosomal subunit protein bL9 (150 aa).

This sequence belongs to the bacterial ribosomal protein bL9 family.

Functionally, binds to the 23S rRNA. In Leuconostoc mesenteroides subsp. mesenteroides (strain ATCC 8293 / DSM 20343 / BCRC 11652 / CCM 1803 / JCM 6124 / NCDO 523 / NBRC 100496 / NCIMB 8023 / NCTC 12954 / NRRL B-1118 / 37Y), this protein is Large ribosomal subunit protein bL9.